The primary structure comprises 87 residues: Small ribosomal subunit protein bS20 (87 aa).

This sequence belongs to the bacterial ribosomal protein bS20 family.

In terms of biological role, binds directly to 16S ribosomal RNA. The protein is Small ribosomal subunit protein bS20 of Rickettsia bellii (strain OSU 85-389).